We begin with the raw amino-acid sequence, 174 residues long: Interferon gamma (174 aa).

The first 23 residues, 1 to 23 (MHTTRCILALLLCLTQAMSGCYC), serve as a signal peptide directing secretion. Pyrrolidone carboxylic acid is present on glutamine 24. N-linked (GlcNAc...) asparagine glycosylation is found at asparagine 39 and asparagine 106.

The protein belongs to the type II (or gamma) interferon family. Homodimer. Interacts with IFNGR1 (via extracellular domain); this interaction promotes IFNGR1 dimerization. As to expression, released primarily from activated T lymphocytes.

The protein resides in the secreted. Its function is as follows. Type II interferon produced by immune cells such as T-cells and NK cells that plays crucial roles in antimicrobial, antiviral, and antitumor responses by activating effector immune cells and enhancing antigen presentation. Primarily signals through the JAK-STAT pathway after interaction with its receptor IFNGR1 to affect gene regulation. Upon IFNG binding, IFNGR1 intracellular domain opens out to allow association of downstream signaling components JAK2, JAK1 and STAT1, leading to STAT1 activation, nuclear translocation and transcription of IFNG-regulated genes. Many of the induced genes are transcription factors such as IRF1 that are able to further drive regulation of a next wave of transcription. Plays a role in class I antigen presentation pathway by inducing a replacement of catalytic proteasome subunits with immunoproteasome subunits. In turn, increases the quantity, quality, and repertoire of peptides for class I MHC loading. Increases the efficiency of peptide generation also by inducing the expression of activator PA28 that associates with the proteasome and alters its proteolytic cleavage preference. Up-regulates as well MHC II complexes on the cell surface by promoting expression of several key molecules such as cathepsins B/CTSB, H/CTSH, and L/CTSL. Participates in the regulation of hematopoietic stem cells during development and under homeostatic conditions by affecting their development, quiescence, and differentiation. This chain is Interferon gamma (IFNG), found in Mesocricetus auratus (Golden hamster).